We begin with the raw amino-acid sequence, 103 residues long: Large ribosomal subunit protein bL21 (103 aa).

Belongs to the bacterial ribosomal protein bL21 family. As to quaternary structure, part of the 50S ribosomal subunit. Contacts protein L20.

Its function is as follows. This protein binds to 23S rRNA in the presence of protein L20. The protein is Large ribosomal subunit protein bL21 of Thiobacillus denitrificans (strain ATCC 25259 / T1).